Consider the following 501-residue polypeptide: Cytochrome P450 76M5 (501 aa).

Residues 5-25 (ELWVLAAALAVSLLYYLAALM) traverse the membrane as a helical segment. C443 contributes to the heme binding site.

It belongs to the cytochrome P450 family. Requires heme as cofactor.

It is found in the membrane. It catalyses the reaction ent-sandaracopimaradien-3beta-ol + reduced [NADPH--hemoprotein reductase] + O2 = oryzalexin E + oxidized [NADPH--hemoprotein reductase] + H2O + H(+). Functionally, enzyme of the diterpenoid metabolism involved in the biosynthesis of the oryzalexin class of phytoalexins. Hydroxylates ent-sandaracopimaradien. The chain is Cytochrome P450 76M5 from Oryza sativa subsp. japonica (Rice).